A 748-amino-acid chain; its full sequence is Catalase-peroxidase (748 aa).

The span at 1 to 16 (MSSDTSASRPPQPDTR) shows a compositional bias: polar residues. Positions 1 to 43 (MSSDTSASRPPQPDTRTASKSESENPAIPSPHPKSNAPLTNRD) are disordered. Positions 113–238 (WHAAGTYRIH…YGATTMGLIY (126 aa)) form a cross-link, tryptophyl-tyrosyl-methioninium (Trp-Tyr) (with M-264). Histidine 114 functions as the Proton acceptor in the catalytic mechanism. The segment at residues 238–264 (YVNPEGPEGKPDPIAAAIDIRETFGRM) is a cross-link (tryptophyl-tyrosyl-methioninium (Tyr-Met) (with W-113)). Histidine 279 serves as a coordination point for heme b.

The protein belongs to the peroxidase family. Peroxidase/catalase subfamily. Homodimer or homotetramer. Requires heme b as cofactor. Post-translationally, formation of the three residue Trp-Tyr-Met cross-link is important for the catalase, but not the peroxidase activity of the enzyme.

The catalysed reaction is H2O2 + AH2 = A + 2 H2O. It carries out the reaction 2 H2O2 = O2 + 2 H2O. Functionally, bifunctional enzyme with both catalase and broad-spectrum peroxidase activity. This chain is Catalase-peroxidase, found in Mycolicibacterium paratuberculosis (strain ATCC BAA-968 / K-10) (Mycobacterium paratuberculosis).